The sequence spans 1893 residues: Endoribonuclease Dicer (1893 aa).

The 177-residue stretch at 41–217 folds into the Helicase ATP-binding domain; sequence LLEAALDHNT…DLEEKIQKLE (177 aa). An ATP-binding site is contributed by 54 to 61; sequence LNSGSGKT. Positions 165–168 match the DECH box motif; the sequence is DECH. Positions 400-424 are disordered; it reads VSWSDSEDDDDEDEEIEEKEKTETS. The span at 404–416 shows a compositional bias: acidic residues; it reads DSEDDDDEDEEIE. The 170-residue stretch at 424-593 folds into the Helicase C-terminal domain; that stretch reads SFPSPFTNIL…SIDCGNTESE (170 aa). A Dicer dsRNA-binding fold domain is found at 621 to 713; that stretch reads AIGHINRYCA…MPVGKETVKY (93 aa). The interval 718-737 is disordered; sequence DLHDEEETSVPGRPGSTKRR. The region spanning 886–1036 is the PAZ domain; sequence KFVEDIEKSE…LVPELCAIHP (151 aa). RNase III domains follow at residues 1249–1380 and 1637–1795; these read TSDM…ETSG and FENF…MDSG. Mg(2+)-binding residues include Glu1293, Asp1371, Glu1374, Glu1676, Asp1781, and Glu1784. In terms of domain architecture, DRBM spans 1820–1885; sequence VPRSPVRELL…ARRALRSLKA (66 aa).

The protein belongs to the helicase family. Dicer subfamily. Component of the RISC loading complex (RLC), or micro-RNA (miRNA) loading complex (miRLC), which is composed of dicer1, ago2 and tarbp2; dicer1 and tarbp2 are required to process precursor miRNAs (pre-miRNAs) to mature miRNAs and then load them onto ago2. Note that the trimeric RLC/miRLC is also referred to as RISC. Mg(2+) is required as a cofactor. Requires Mn(2+) as cofactor.

Its subcellular location is the cytoplasm. The enzyme catalyses Endonucleolytic cleavage to 5'-phosphomonoester.. Its function is as follows. Double-stranded RNA (dsRNA) endoribonuclease playing a central role in short dsRNA-mediated post-transcriptional gene silencing. Cleaves naturally occurring long dsRNAs and short hairpin pre-microRNAs (miRNA) into fragments of twenty-one to twenty-three nucleotides with 3' overhang of two nucleotides, producing respectively short interfering RNAs (siRNA) and mature microRNAs. SiRNAs and miRNAs serve as guide to direct the RNA-induced silencing complex (RISC) to complementary RNAs to degrade them or prevent their translation. Gene silencing mediated by siRNAs, also called RNA interference, controls the elimination of transcripts from mobile and repetitive DNA elements of the genome but also the degradation of exogenous RNA of viral origin for instance. The miRNA pathway on the other side is a mean to specifically regulate the expression of target genes. This is Endoribonuclease Dicer (dicer1) from Xenopus tropicalis (Western clawed frog).